Here is a 475-residue protein sequence, read N- to C-terminus: Methyltransferase-like protein 25B (475 aa).

A coiled-coil region spans residues 185–210; the sequence is NKRLVARAQRLDQELLQALDKMEKRH. Residues 406–426 traverse the membrane as a helical segment; it reads VVAFFSLALLLAPLVETLILL.

This sequence belongs to the METTL25 family.

It localises to the membrane. This Rattus norvegicus (Rat) protein is Methyltransferase-like protein 25B.